Here is a 547-residue protein sequence, read N- to C-terminus: Putative laccase-5 (547 aa).

An N-terminal signal peptide occupies residues 1 to 35 (MGTPRGLRNAGSSSSACRFLAAFAVLLALPTLTAG). Plastocyanin-like domains follow at residues 43-159 (NVQM…PKRG) and 170-323 (ELPP…YAPT). 2 N-linked (GlcNAc...) asparagine glycosylation sites follow: N48 and N89. 4 residues coordinate Cu cation: H93, H95, H138, and H140. N-linked (GlcNAc...) asparagine glycans are attached at residues N199, N215, N251, N311, N342, N349, N388, N395, N405, and N430. A Plastocyanin-like 3 domain is found at 408–531 (FVRPRVALLE…SMAWLVNDGP (124 aa)). Cu cation is bound by residues H448, H451, H453, H510, C511, H512, and H516.

The protein belongs to the multicopper oxidase family. Requires Cu cation as cofactor.

It is found in the secreted. Its subcellular location is the extracellular space. It localises to the apoplast. It carries out the reaction 4 hydroquinone + O2 = 4 benzosemiquinone + 2 H2O. Functionally, lignin degradation and detoxification of lignin-derived products. This is Putative laccase-5 (LAC5) from Oryza sativa subsp. japonica (Rice).